The primary structure comprises 106 residues: Flagellar transcriptional regulator FlhD (106 aa).

It belongs to the FlhD family. As to quaternary structure, homodimer; disulfide-linked. Forms a heterohexamer composed of two FlhC and four FlhD subunits. Each FlhC binds a FlhD dimer, forming a heterotrimer, and a hexamer assembles by dimerization of two heterotrimers.

The protein resides in the cytoplasm. In terms of biological role, functions in complex with FlhC as a master transcriptional regulator that regulates transcription of several flagellar and non-flagellar operons by binding to their promoter region. Activates expression of class 2 flagellar genes, including fliA, which is a flagellum-specific sigma factor that turns on the class 3 genes. Also regulates genes whose products function in a variety of physiological pathways. The sequence is that of Flagellar transcriptional regulator FlhD from Burkholderia mallei (strain SAVP1).